A 224-amino-acid polypeptide reads, in one-letter code: Germin-like protein 8-4 (224 aa).

The signal sequence occupies residues 1–23 (MASSSSLYLLAALLALASWQAIA). An intrachain disulfide couples C33 to C48. The region spanning 70–213 (STMNKVGSNV…AFQVEKKVID (144 aa)) is the Cupin type-1 domain. An N-linked (GlcNAc...) asparagine glycan is attached at N78. Residues H111, H113, E118, and H158 each coordinate Mn(2+).

It belongs to the germin family. Oligomer (believed to be a pentamer but probably hexamer).

It is found in the secreted. Its subcellular location is the extracellular space. The protein localises to the apoplast. Plays a role in broad-spectrum disease resistance. Probably has no oxalate oxidase activity even if the active site is conserved. The polypeptide is Germin-like protein 8-4 (GER1) (Oryza sativa subsp. japonica (Rice)).